The following is a 377-amino-acid chain: Chaperone protein DnaJ (377 aa).

The 66-residue stretch at 5–70 (DFYEVLGVER…SKRAAYDQYG (66 aa)) folds into the J domain. The CR-type zinc-finger motif lies at 136–214 (GTTVTIRVPT…CHGQGRVEEQ (79 aa)). Cys149, Cys152, Cys166, Cys169, Cys188, Cys191, Cys202, and Cys205 together coordinate Zn(2+). 4 CXXCXGXG motif repeats span residues 149-156 (CKTCNGSG), 166-173 (CTTCGGIG), 188-195 (CPRCHGTG), and 202-209 (CGSCHGQG).

The protein belongs to the DnaJ family. In terms of assembly, homodimer. It depends on Zn(2+) as a cofactor.

The protein resides in the cytoplasm. Its function is as follows. Participates actively in the response to hyperosmotic and heat shock by preventing the aggregation of stress-denatured proteins and by disaggregating proteins, also in an autonomous, DnaK-independent fashion. Unfolded proteins bind initially to DnaJ; upon interaction with the DnaJ-bound protein, DnaK hydrolyzes its bound ATP, resulting in the formation of a stable complex. GrpE releases ADP from DnaK; ATP binding to DnaK triggers the release of the substrate protein, thus completing the reaction cycle. Several rounds of ATP-dependent interactions between DnaJ, DnaK and GrpE are required for fully efficient folding. Also involved, together with DnaK and GrpE, in the DNA replication of plasmids through activation of initiation proteins. This chain is Chaperone protein DnaJ, found in Pseudomonas paraeruginosa (strain DSM 24068 / PA7) (Pseudomonas aeruginosa (strain PA7)).